Reading from the N-terminus, the 634-residue chain is MRRPKKYESGEATQYISRRAALRRLQLSLNDFRRLCILKGVYPREPKHRRRAQKGSSEIKILYHAKDIRFLLHESIVWTLRDYKIFAKKSGRDRAIKDFRNLKRRLALFPEIKLDHIVKERYPTFIDALKDLDDCLTLLFLFSTFPSLHLIPREQSALCRRLTIEFLHYVIASKSLRKVFISIKGYYFQAEIKGQKVTWIVPHYYPFKPQSRQDVDFKVMSIFVEFYTIMLGFVNFRLFHGLNLAYPPQFPSSVLQDNSETLQDESSFVSDRIAALNFELLRTDKLMEDEEELDIDMELLEQDGDSKRIIKMKQEAQEVARLRTLFKGLKFFINREVPREPLIILIRSFGGKVSWDASVFAGATFDESDETITHQIVDRPSLSTQYISRDYIQPQWVFDCINQRQLLPTNKYFMGEQLPPHLSPFVDSKRETYIPPEEKALHDPSLIETHVQSDDDDDDSDAEADNQEEEEIEQQLLDAQLQRAYQQETAEYKKYGGTDGVNEDEEDSVDDDDEEDEEEEEEEDVEQLDDKTKRLLEEKQKMKVESGKVHKVNKRQIRKAEVDEHRLQARMVKPRHRNLFRKLIREKQTKEKEEWLLRKKRRNIDADAKEAKKTAKREAKKAAAEAAAKALKMA.

The region spanning 321-414 (RLRTLFKGLK…QLLPTNKYFM (94 aa)) is the BRCT domain. Disordered regions lie at residues 437 to 473 (EEKALHDPSLIETHVQSDDDDDDSDAEADNQEEEEIE), 491 to 561 (EYKK…RKAE), and 603 to 634 (NIDADAKEAKKTAKREAKKAAAEAAAKALKMA). Serine 453 carries the post-translational modification Phosphoserine. Acidic residues-rich tracts occupy residues 454-473 (DDDDDDSDAEADNQEEEEIE) and 501-527 (VNEDEEDSVDDDDEEDEEEEEEEDVEQ). Coiled-coil stretches lie at residues 460-546 (SDAE…KVES) and 596-629 (LLRKKRRNIDADAKEAKKTAKREAKKAAAEAAAK). Composition is skewed to basic and acidic residues over residues 528-548 (LDDKTKRLLEEKQKMKVESGK) and 603-623 (NIDADAKEAKKTAKREAKKAA). Over residues 624-634 (AEAAAKALKMA) the composition is skewed to low complexity.

This sequence belongs to the pescadillo family.

Its subcellular location is the nucleus. It is found in the nucleolus. The protein resides in the nucleoplasm. Its function is as follows. Required for maturation of ribosomal RNAs and formation of the large ribosomal subunit. This chain is Pescadillo homolog, found in Drosophila willistoni (Fruit fly).